Consider the following 898-residue polypeptide: Vacuolar protein sorting-associated protein 41 homolog (898 aa).

A compositionally biased stretch (basic and acidic residues) spans 1–10; it reads MDESNDKENE. The interval 1–35 is disordered; that stretch reads MDESNDKENEFGDSFLEDSGDITRTTEDEDEAPLE. A CHCR repeat occupies 614–756; the sequence is LRLLLDNADS…VADFPTHFSQ (143 aa). Residues 835–890 form an RING-type; atypical zinc finger; the sequence is CSLCSQVIMNTGQDMIPRKFNDIKVFKCGHIFHLTCSASEIDRRQMIEDGICIACS.

This sequence belongs to the VPS41 family. Probable component of the homotypic fusion and vacuole protein sorting (HOPS) complex consisting of the core class C Vps proteins vps-11, vps-16, vps-18, and which further associates with vps-33.1, vps-39 and vps-41.

It is found in the endosome membrane. The protein resides in the late endosome. Its subcellular location is the lysosome. The protein localises to the golgi apparatus. It localises to the trans-Golgi network. It is found in the early endosome. The protein resides in the cytoplasmic vesicle. Its subcellular location is the clathrin-coated vesicle. In terms of biological role, plays a role in vesicle-mediated protein trafficking to lysosomal compartments including the endocytic membrane transport pathways. Believed to act in part as a core component of the putative HOPS endosomal tethering complex which is proposed to be involved in the rab-5-to-rab-7 endosome conversion probably implicating sand-1, and via binding SNAREs and SNARE complexes to mediate tethering and docking events during SNARE-mediated membrane fusion. The HOPS complex is proposed to be recruited to rab-7 on the late endosomal membrane and to regulate late endocytic, phagocytic and autophagic traffic towards lysosomes. Within the HOPS complex, contributes to the normal development of gut granules in the adult intestine. May mediate the tethering of autophagosomes with lysosomes. Has a role in the negative regulation of apoptosis. Required for uptake of exogenous dsRNA which is used in experimental RNA silencing. This Caenorhabditis briggsae protein is Vacuolar protein sorting-associated protein 41 homolog.